The primary structure comprises 226 residues: CRISPR-associated endonuclease Cas3-HD (226 aa).

In terms of domain architecture, HD Cas3-type spans 9 to 204 (GRDCLQTYED…HVLTVCDNWG (196 aa)). Positions 56, 74, 101, and 102 each coordinate Mg(2+).

Belongs to the CRISPR-associated nuclease Cas3-HD family. In terms of assembly, monomer. Can form a Cascade complex with Csa5, Cas7, Cas5a, Cas3 and Cas8a2. Mg(2+) is required as a cofactor.

CRISPR (clustered regularly interspaced short palindromic repeat), is an adaptive immune system that provides protection against mobile genetic elements (viruses, transposable elements and conjugative plasmids). CRISPR clusters contain sequences complementary to antecedent mobile elements and target invading nucleic acids. CRISPR clusters are transcribed and processed into CRISPR RNA (crRNA). Cas3 plus Cascade participate in CRISPR interference, the third stage of CRISPR immunity. Acts as a ssDNA and ssRNA nuclease, probably with both exo- and endonuclease activities. Activity is higher for DNA than RNA. The polypeptide is CRISPR-associated endonuclease Cas3-HD (cas3') (Thermoproteus tenax (strain ATCC 35583 / DSM 2078 / JCM 9277 / NBRC 100435 / Kra 1)).